The primary structure comprises 494 residues: MKLMDLLEEIDTIEIKGEERINIENIYYDSRKVTPNSLFICIEGFQTDGHHFIDQAIKKGAIAIVAQKDMTGLDGVTWVQVKDTRQVMAQLGSTFYGRPSQHLELIGVTGTNGKTSTTYMIKKILENHERKVGLIGTIANWIGNTEVEAQRTTPESIDLQQIFKEMADEKVTECVMEVSSHALALERVAESEFKVGVFTNLTPEHLDFHENIDNYREAKKKLFYLTTVANVINIDDPHGAMIAEEVKKLKPSLITFGIKKQATVMAKNIATTLKDVTFDLVTPVGEARVTVKIPGIFSAYNALASIATSIAIGVPFDVIVQGIQSIPGVPGRFESVLGIKDFSVIVDYAHTPDAIENVIQAAKNVTEHRVITVFGCGGDRDRTKRSVMGEISGSLSDLSVITSDNPRTEDPYKILMMIEAGIKKTKGLYTIIEDRREAIRYAMKEAKKGDIVLIAGKGHEATQQIGSNVIIFDDCGVAREIAKEEGLDDSDIHS.

Ser-30 contacts UDP-N-acetyl-alpha-D-muramoyl-L-alanyl-D-glutamate. 110-116 (GTNGKTS) lines the ATP pocket. UDP-N-acetyl-alpha-D-muramoyl-L-alanyl-D-glutamate contacts are provided by residues 152-153 (TT), Ser-179, and Arg-187. The residue at position 219 (Lys-219) is an N6-carboxylysine. Meso-2,6-diaminopimelate-binding positions include Arg-380, 404–407 (DNPR), Gly-456, and Glu-460. Positions 404–407 (DNPR) match the Meso-diaminopimelate recognition motif motif.

This sequence belongs to the MurCDEF family. MurE subfamily. Mg(2+) is required as a cofactor. Post-translationally, carboxylation is probably crucial for Mg(2+) binding and, consequently, for the gamma-phosphate positioning of ATP.

The protein resides in the cytoplasm. The enzyme catalyses UDP-N-acetyl-alpha-D-muramoyl-L-alanyl-D-glutamate + meso-2,6-diaminopimelate + ATP = UDP-N-acetyl-alpha-D-muramoyl-L-alanyl-gamma-D-glutamyl-meso-2,6-diaminopimelate + ADP + phosphate + H(+). Its pathway is cell wall biogenesis; peptidoglycan biosynthesis. In terms of biological role, catalyzes the addition of meso-diaminopimelic acid to the nucleotide precursor UDP-N-acetylmuramoyl-L-alanyl-D-glutamate (UMAG) in the biosynthesis of bacterial cell-wall peptidoglycan. This chain is UDP-N-acetylmuramoyl-L-alanyl-D-glutamate--2,6-diaminopimelate ligase, found in Alkaliphilus metalliredigens (strain QYMF).